Reading from the N-terminus, the 255-residue chain is Putative OPA3-like protein CG13603 (255 aa).

The stretch at 108–154 (KENKKNELAQSEKMELTNMLTEMNFRLERQDAQIREMTRVLADLDSR) forms a coiled coil. The tract at residues 168–187 (VPFDPDTPDQSASARNPKKF) is disordered. Residues 212 to 241 (DGRNRKAKEALQHLDEVAVQLEQSLGEAAT) are a coiled coil.

It belongs to the OPA3 family.

The chain is Putative OPA3-like protein CG13603 from Drosophila melanogaster (Fruit fly).